The chain runs to 202 residues: Large ribosomal subunit protein bL25 (202 aa).

Belongs to the bacterial ribosomal protein bL25 family. CTC subfamily. In terms of assembly, part of the 50S ribosomal subunit; part of the 5S rRNA/L5/L18/L25 subcomplex. Contacts the 5S rRNA. Binds to the 5S rRNA independently of L5 and L18.

In terms of biological role, this is one of the proteins that binds to the 5S RNA in the ribosome where it forms part of the central protuberance. The chain is Large ribosomal subunit protein bL25 from Corynebacterium efficiens (strain DSM 44549 / YS-314 / AJ 12310 / JCM 11189 / NBRC 100395).